The sequence spans 420 residues: Protein MucB (420 aa).

The UmuC domain maps to 2-187 (FALIDVNGMY…LPVAEVWGVG (186 aa)).

The protein belongs to the DNA polymerase type-Y family.

Involved in UV protection and mutation. This chain is Protein MucB (mucB), found in Escherichia coli.